A 116-amino-acid polypeptide reads, in one-letter code: Large ribosomal subunit protein bL17 (116 aa).

The protein belongs to the bacterial ribosomal protein bL17 family. In terms of assembly, part of the 50S ribosomal subunit. Contacts protein L32.

This Prochlorococcus marinus (strain MIT 9301) protein is Large ribosomal subunit protein bL17.